A 349-amino-acid chain; its full sequence is Oxygen-dependent coproporphyrinogen-III oxidase (349 aa).

Disordered regions lie at residues 1 to 21 (MGAS…KRAR) and 37 to 60 (SLDG…GRSK). Substrate is bound at residue Ser105. A divalent metal cation-binding residues include His109 and His119. The active-site Proton donor is the His119. Substrate is bound at residue 121–123 (NYR). The a divalent metal cation site is built by His153 and His183. Positions 273–308 (YAEFNLVWDRGTIFGLQTNGRTESILMSLPPLARWE) are important for dimerization.

Belongs to the aerobic coproporphyrinogen-III oxidase family. Homodimer. The cofactor is a divalent metal cation.

It localises to the cytoplasm. The enzyme catalyses coproporphyrinogen III + O2 + 2 H(+) = protoporphyrinogen IX + 2 CO2 + 2 H2O. It functions in the pathway porphyrin-containing compound metabolism; protoporphyrin-IX biosynthesis; protoporphyrinogen-IX from coproporphyrinogen-III (O2 route): step 1/1. Its function is as follows. Involved in the heme and chlorophyll biosynthesis. Catalyzes the aerobic oxidative decarboxylation of propionate groups of rings A and B of coproporphyrinogen-III to yield the vinyl groups in protoporphyrinogen-IX. This Prochlorococcus marinus (strain MIT 9313) protein is Oxygen-dependent coproporphyrinogen-III oxidase.